The chain runs to 443 residues: Dihydroorotase (443 aa).

Zn(2+) is bound by residues histidine 80 and histidine 82. Residues 82-84 (HFR) and asparagine 114 contribute to the substrate site. Residues aspartate 170, histidine 197, and histidine 251 each coordinate Zn(2+). Asparagine 297 provides a ligand contact to substrate. Aspartate 324 is a Zn(2+) binding site. The active site involves aspartate 324. Substrate-binding positions include histidine 328 and 342 to 343 (FG).

Belongs to the metallo-dependent hydrolases superfamily. DHOase family. Class I DHOase subfamily. The cofactor is Zn(2+).

It catalyses the reaction (S)-dihydroorotate + H2O = N-carbamoyl-L-aspartate + H(+). It functions in the pathway pyrimidine metabolism; UMP biosynthesis via de novo pathway; (S)-dihydroorotate from bicarbonate: step 3/3. Catalyzes the reversible cyclization of carbamoyl aspartate to dihydroorotate. The sequence is that of Dihydroorotase from Wolbachia sp. subsp. Brugia malayi (strain TRS).